Reading from the N-terminus, the 400-residue chain is Enoyl-[acyl-carrier-protein] reductase [NADH] (400 aa).

Residues 48–53 (GASTGY), 74–75 (FE), 111–112 (DA), and 139–140 (LA) each bind NAD(+). Tyr225 contacts substrate. The active-site Proton donor is the Tyr235. Residues Lys244 and 273–275 (VVT) each bind NAD(+).

It belongs to the TER reductase family. In terms of assembly, monomer.

The enzyme catalyses a 2,3-saturated acyl-[ACP] + NAD(+) = a (2E)-enoyl-[ACP] + NADH + H(+). Its pathway is lipid metabolism; fatty acid biosynthesis. Its function is as follows. Involved in the final reduction of the elongation cycle of fatty acid synthesis (FAS II). Catalyzes the reduction of a carbon-carbon double bond in an enoyl moiety that is covalently linked to an acyl carrier protein (ACP). In Burkholderia cenocepacia (strain HI2424), this protein is Enoyl-[acyl-carrier-protein] reductase [NADH].